Reading from the N-terminus, the 603-residue chain is NADH-ubiquinone oxidoreductase chain 5 (603 aa).

A run of 16 helical transmembrane segments spans residues 4-24 (FTTM…ATLI), 38-58 (TAIA…ICLG), 89-109 (FLPV…WYMA), 122-142 (LIFL…QLFI), 171-191 (AILY…WFLL), 211-233 (LPLL…HPWL), 241-261 (TPVS…FLLI), 273-293 (IQTL…ICAL), 301-320 (IVAF…IGIN), 325-347 (AFLH…GSII), 366-386 (MPLT…MPFL), 405-424 (NAWA…AYST), 457-477 (LMTG…PTSL), 488-508 (LAAL…NYLA), 537-557 (IPHL…DLTW), and 582-602 (GMIK…LLMI).

The protein belongs to the complex I subunit 5 family. In terms of assembly, core subunit of respiratory chain NADH dehydrogenase (Complex I) which is composed of 45 different subunits.

It localises to the mitochondrion inner membrane. It catalyses the reaction a ubiquinone + NADH + 5 H(+)(in) = a ubiquinol + NAD(+) + 4 H(+)(out). Core subunit of the mitochondrial membrane respiratory chain NADH dehydrogenase (Complex I) which catalyzes electron transfer from NADH through the respiratory chain, using ubiquinone as an electron acceptor. Essential for the catalytic activity and assembly of complex I. The sequence is that of NADH-ubiquinone oxidoreductase chain 5 (MT-ND5) from Pongo pygmaeus (Bornean orangutan).